A 143-amino-acid polypeptide reads, in one-letter code: 3-dehydroquinate dehydratase (143 aa).

Catalysis depends on Tyr-22, which acts as the Proton acceptor. Positions 73, 79, and 86 each coordinate substrate. His-99 (proton donor) is an active-site residue. Residues 100 to 101 (IS) and Arg-110 contribute to the substrate site.

It belongs to the type-II 3-dehydroquinase family. In terms of assembly, homododecamer.

It carries out the reaction 3-dehydroquinate = 3-dehydroshikimate + H2O. It participates in metabolic intermediate biosynthesis; chorismate biosynthesis; chorismate from D-erythrose 4-phosphate and phosphoenolpyruvate: step 3/7. Its function is as follows. Catalyzes a trans-dehydration via an enolate intermediate. This Mycobacterium avium (strain 104) protein is 3-dehydroquinate dehydratase.